The following is a 180-amino-acid chain: Flavodoxin B (180 aa).

The 170-residue stretch at 4-173 folds into the Flavodoxin-like domain; sequence IGLFFGSNTG…RVAAWLAQIA (170 aa).

This sequence belongs to the flavodoxin family. FMN is required as a cofactor.

Functionally, low-potential electron donor to a number of redox enzymes. NifF is the electron donor to nitrogenase. The chain is Flavodoxin B (nifF) from Azotobacter chroococcum mcd 1.